We begin with the raw amino-acid sequence, 162 residues long: Protein SLM4 (162 aa).

The chain crosses the membrane as a helical span at residues 127 to 144 (LLLLFIAEGSFPYGLLVI).

In terms of assembly, component of the GSE complex composed of GTR1, GTR2, SLM4, MEH1 and LTV1. Component of the EGO complex, at least composed of GTR2, SLM4 and MEH1.

The protein localises to the vacuole membrane. In terms of biological role, component of the GSE complex, a GTPase complex required for intracellular sorting of GAP1 out of the endosome. Component of the EGO complex, a complex involved in the regulation of microautophagy. In Saccharomyces cerevisiae (strain ATCC 204508 / S288c) (Baker's yeast), this protein is Protein SLM4 (SLM4).